The primary structure comprises 429 residues: Enolase (429 aa).

(2R)-2-phosphoglycerate is bound at residue Gln164. Glu206 functions as the Proton donor in the catalytic mechanism. Mg(2+) contacts are provided by Asp243, Glu286, and Asp313. Residues Lys338, Arg367, Ser368, and Lys389 each contribute to the (2R)-2-phosphoglycerate site. Lys338 functions as the Proton acceptor in the catalytic mechanism.

The protein belongs to the enolase family. Requires Mg(2+) as cofactor.

The protein localises to the cytoplasm. Its subcellular location is the secreted. The protein resides in the cell surface. The enzyme catalyses (2R)-2-phosphoglycerate = phosphoenolpyruvate + H2O. It functions in the pathway carbohydrate degradation; glycolysis; pyruvate from D-glyceraldehyde 3-phosphate: step 4/5. In terms of biological role, catalyzes the reversible conversion of 2-phosphoglycerate (2-PG) into phosphoenolpyruvate (PEP). It is essential for the degradation of carbohydrates via glycolysis. The sequence is that of Enolase from Thermosipho melanesiensis (strain DSM 12029 / CIP 104789 / BI429).